A 94-amino-acid chain; its full sequence is Pyrimidine/purine nucleoside phosphorylase (94 aa).

Belongs to the nucleoside phosphorylase PpnP family.

It catalyses the reaction a purine D-ribonucleoside + phosphate = a purine nucleobase + alpha-D-ribose 1-phosphate. The catalysed reaction is adenosine + phosphate = alpha-D-ribose 1-phosphate + adenine. It carries out the reaction cytidine + phosphate = cytosine + alpha-D-ribose 1-phosphate. The enzyme catalyses guanosine + phosphate = alpha-D-ribose 1-phosphate + guanine. It catalyses the reaction inosine + phosphate = alpha-D-ribose 1-phosphate + hypoxanthine. The catalysed reaction is thymidine + phosphate = 2-deoxy-alpha-D-ribose 1-phosphate + thymine. It carries out the reaction uridine + phosphate = alpha-D-ribose 1-phosphate + uracil. The enzyme catalyses xanthosine + phosphate = alpha-D-ribose 1-phosphate + xanthine. In terms of biological role, catalyzes the phosphorolysis of diverse nucleosides, yielding D-ribose 1-phosphate and the respective free bases. Can use uridine, adenosine, guanosine, cytidine, thymidine, inosine and xanthosine as substrates. Also catalyzes the reverse reactions. This chain is Pyrimidine/purine nucleoside phosphorylase, found in Escherichia fergusonii (strain ATCC 35469 / DSM 13698 / CCUG 18766 / IAM 14443 / JCM 21226 / LMG 7866 / NBRC 102419 / NCTC 12128 / CDC 0568-73).